A 74-amino-acid chain; its full sequence is Tetrahydromethanopterin S-methyltransferase subunit G (74 aa).

Residues 47–67 form a helical membrane-spanning segment; that stretch reads VGIAYGLAIGFIFVYVLGTVL.

The protein belongs to the MtrG family. As to quaternary structure, the complex is composed of 8 subunits; MtrA, MtrB, MtrC, MtrD, MtrE, MtrF, MtrG and MtrH.

The protein resides in the cell membrane. It catalyses the reaction 5-methyl-5,6,7,8-tetrahydromethanopterin + coenzyme M + 2 Na(+)(in) = 5,6,7,8-tetrahydromethanopterin + methyl-coenzyme M + 2 Na(+)(out). It functions in the pathway one-carbon metabolism; methanogenesis from CO(2); methyl-coenzyme M from 5,10-methylene-5,6,7,8-tetrahydromethanopterin: step 2/2. Part of a complex that catalyzes the formation of methyl-coenzyme M and tetrahydromethanopterin from coenzyme M and methyl-tetrahydromethanopterin. This is an energy-conserving, sodium-ion translocating step. This is Tetrahydromethanopterin S-methyltransferase subunit G from Methanococcus maripaludis (strain DSM 14266 / JCM 13030 / NBRC 101832 / S2 / LL).